Reading from the N-terminus, the 154-residue chain is Egg-lysin (154 aa).

An N-terminal signal peptide occupies residues 1-18 (MKLLVLCIFAMMATLAMS).

As to quaternary structure, monomer. Homodimer. Molecules associate into dimers and then rapidly dissociate again. Interacts (as a monomer) with the egg vitelline layer protein VERL (via VERL repeats); each VERL chain can bind multiple copies of lysin. In terms of tissue distribution, sperm (at protein level).

Its subcellular location is the cytoplasmic vesicle. The protein localises to the secretory vesicle. It localises to the acrosome lumen. Functionally, creates a 3 um hole in the egg vitelline layer through which the sperm passes. Does not have enzyme activity. Species-specific interaction between the sperm protein lysin and the egg protein VERL exposes a basic surface on lysin that may dissociate the egg vitelline layer via electrostatic repulsion. Plays a role in ensuring species-specific fertilization. The protein is Egg-lysin of Haliotis rufescens (California red abalone).